Consider the following 410-residue polypeptide: Serine hydroxymethyltransferase (410 aa).

Residues leucine 119 and 123-125 (GHL) contribute to the (6S)-5,6,7,8-tetrahydrofolate site. Lysine 228 carries the post-translational modification N6-(pyridoxal phosphate)lysine. Position 351 to 353 (351 to 353 (SPF)) interacts with (6S)-5,6,7,8-tetrahydrofolate.

Belongs to the SHMT family. In terms of assembly, homodimer. Pyridoxal 5'-phosphate is required as a cofactor.

It is found in the cytoplasm. The catalysed reaction is (6R)-5,10-methylene-5,6,7,8-tetrahydrofolate + glycine + H2O = (6S)-5,6,7,8-tetrahydrofolate + L-serine. Its pathway is one-carbon metabolism; tetrahydrofolate interconversion. It participates in amino-acid biosynthesis; glycine biosynthesis; glycine from L-serine: step 1/1. In terms of biological role, catalyzes the reversible interconversion of serine and glycine with tetrahydrofolate (THF) serving as the one-carbon carrier. This reaction serves as the major source of one-carbon groups required for the biosynthesis of purines, thymidylate, methionine, and other important biomolecules. Also exhibits THF-independent aldolase activity toward beta-hydroxyamino acids, producing glycine and aldehydes, via a retro-aldol mechanism. The chain is Serine hydroxymethyltransferase from Alkaliphilus oremlandii (strain OhILAs) (Clostridium oremlandii (strain OhILAs)).